The following is a 310-amino-acid chain: NAD kinase 1 (310 aa).

D68 (proton acceptor) is an active-site residue. NAD(+) contacts are provided by residues 68–69 (DG), 145–146 (NE), R156, H175, and D177.

Belongs to the NAD kinase family. The cofactor is a divalent metal cation.

It is found in the cytoplasm. It carries out the reaction NAD(+) + ATP = ADP + NADP(+) + H(+). In terms of biological role, involved in the regulation of the intracellular balance of NAD and NADP, and is a key enzyme in the biosynthesis of NADP. Catalyzes specifically the phosphorylation on 2'-hydroxyl of the adenosine moiety of NAD to yield NADP. The chain is NAD kinase 1 from Gloeobacter violaceus (strain ATCC 29082 / PCC 7421).